We begin with the raw amino-acid sequence, 530 residues long: ATP synthase subunit alpha (530 aa).

An ATP-binding site is contributed by 172–179 (GDRQTGKT).

This sequence belongs to the ATPase alpha/beta chains family. F-type ATPases have 2 components, CF(1) - the catalytic core - and CF(0) - the membrane proton channel. CF(1) has five subunits: alpha(3), beta(3), gamma(1), delta(1), epsilon(1). CF(0) has three main subunits: a(1), b(2) and c(9-12). The alpha and beta chains form an alternating ring which encloses part of the gamma chain. CF(1) is attached to CF(0) by a central stalk formed by the gamma and epsilon chains, while a peripheral stalk is formed by the delta and b chains.

Its subcellular location is the cell inner membrane. It catalyses the reaction ATP + H2O + 4 H(+)(in) = ADP + phosphate + 5 H(+)(out). In terms of biological role, produces ATP from ADP in the presence of a proton gradient across the membrane. The alpha chain is a regulatory subunit. This Phocaeicola vulgatus (strain ATCC 8482 / DSM 1447 / JCM 5826 / CCUG 4940 / NBRC 14291 / NCTC 11154) (Bacteroides vulgatus) protein is ATP synthase subunit alpha.